Consider the following 148-residue polypeptide: MNTISSLETTDLPAAYHIEQRAHAFPWSEKTFASNQGERYLNFQLTQNGKMAAFAITQVVLDEATLFNIAVDPDYQRQGLGRALLEHLIDELEKRGVATLWLEVRASNAAAIALYESLGFNEATIRRNYYPTTDGREDAIIMALPISM.

The N-acetyltransferase domain occupies 2–147 (NTISSLETTD…DAIIMALPIS (146 aa)). Position 69–71 (69–71 (IAV)) interacts with acetyl-CoA. Glu103 acts as the Proton acceptor in catalysis. An acetyl-CoA-binding site is contributed by Asn108. The Proton donor role is filled by Tyr115.

It belongs to the acetyltransferase family. RimI subfamily.

The protein resides in the cytoplasm. The catalysed reaction is N-terminal L-alanyl-[ribosomal protein bS18] + acetyl-CoA = N-terminal N(alpha)-acetyl-L-alanyl-[ribosomal protein bS18] + CoA + H(+). Acetylates the N-terminal alanine of ribosomal protein bS18. The polypeptide is [Ribosomal protein bS18]-alanine N-acetyltransferase (Escherichia coli O157:H7).